Here is a 510-residue protein sequence, read N- to C-terminus: Bifunctional purine biosynthesis protein PurH (510 aa).

The region spanning 1 to 143 (MTKRALISVS…KNHSGVLVLV (143 aa)) is the MGS-like domain.

The protein belongs to the PurH family.

It catalyses the reaction (6R)-10-formyltetrahydrofolate + 5-amino-1-(5-phospho-beta-D-ribosyl)imidazole-4-carboxamide = 5-formamido-1-(5-phospho-D-ribosyl)imidazole-4-carboxamide + (6S)-5,6,7,8-tetrahydrofolate. The catalysed reaction is IMP + H2O = 5-formamido-1-(5-phospho-D-ribosyl)imidazole-4-carboxamide. It participates in purine metabolism; IMP biosynthesis via de novo pathway; 5-formamido-1-(5-phospho-D-ribosyl)imidazole-4-carboxamide from 5-amino-1-(5-phospho-D-ribosyl)imidazole-4-carboxamide (10-formyl THF route): step 1/1. The protein operates within purine metabolism; IMP biosynthesis via de novo pathway; IMP from 5-formamido-1-(5-phospho-D-ribosyl)imidazole-4-carboxamide: step 1/1. This is Bifunctional purine biosynthesis protein PurH from Deinococcus deserti (strain DSM 17065 / CIP 109153 / LMG 22923 / VCD115).